The chain runs to 807 residues: Glycerol-3-phosphate acyltransferase (807 aa).

An HXXXXD motif motif is present at residues 308–313 (CHRSHM).

This sequence belongs to the GPAT/DAPAT family.

The protein resides in the cell inner membrane. It carries out the reaction sn-glycerol 3-phosphate + an acyl-CoA = a 1-acyl-sn-glycero-3-phosphate + CoA. It functions in the pathway phospholipid metabolism; CDP-diacylglycerol biosynthesis; CDP-diacylglycerol from sn-glycerol 3-phosphate: step 1/3. The polypeptide is Glycerol-3-phosphate acyltransferase (Shewanella sp. (strain MR-4)).